Consider the following 440-residue polypeptide: Ribosomal protein uS12 methylthiotransferase RimO (440 aa).

The region spanning 2–117 is the MTTase N-terminal domain; sequence VKVGFVSLGC…LPNVIKKLYE (116 aa). [4Fe-4S] cluster-binding residues include Cys-11, Cys-47, Cys-80, Cys-156, Cys-160, and Cys-163. One can recognise a Radical SAM core domain in the interval 142-371; it reads ATPKFYAYIK…LNLQRKISLE (230 aa). Residues 374 to 440 enclose the TRAM domain; it reads RKRISKKYEV…FEYDLVGEVI (67 aa).

It belongs to the methylthiotransferase family. RimO subfamily. Requires [4Fe-4S] cluster as cofactor.

Its subcellular location is the cytoplasm. The catalysed reaction is L-aspartate(89)-[ribosomal protein uS12]-hydrogen + (sulfur carrier)-SH + AH2 + 2 S-adenosyl-L-methionine = 3-methylsulfanyl-L-aspartate(89)-[ribosomal protein uS12]-hydrogen + (sulfur carrier)-H + 5'-deoxyadenosine + L-methionine + A + S-adenosyl-L-homocysteine + 2 H(+). In terms of biological role, catalyzes the methylthiolation of an aspartic acid residue of ribosomal protein uS12. The polypeptide is Ribosomal protein uS12 methylthiotransferase RimO (Caldicellulosiruptor saccharolyticus (strain ATCC 43494 / DSM 8903 / Tp8T 6331)).